The following is a 397-amino-acid chain: Lipid-A-disaccharide synthase (397 aa).

This sequence belongs to the LpxB family.

The catalysed reaction is a lipid X + a UDP-2-N,3-O-bis[(3R)-3-hydroxyacyl]-alpha-D-glucosamine = a lipid A disaccharide + UDP + H(+). It functions in the pathway bacterial outer membrane biogenesis; LPS lipid A biosynthesis. Functionally, condensation of UDP-2,3-diacylglucosamine and 2,3-diacylglucosamine-1-phosphate to form lipid A disaccharide, a precursor of lipid A, a phosphorylated glycolipid that anchors the lipopolysaccharide to the outer membrane of the cell. This Mannheimia succiniciproducens (strain KCTC 0769BP / MBEL55E) protein is Lipid-A-disaccharide synthase.